Reading from the N-terminus, the 578-residue chain is Signal peptide peptidase-like 2B (578 aa).

Positions 1–19 (MAAARLAAALLLLAAQVAC) are cleaved as a signal peptide. Topologically, residues 20–168 (EFGVLRVVSQ…APSEPVMDYN (149 aa)) are lumenal. Residues 61–145 (LRDLSTTQLC…LLSHRDLQDI (85 aa)) form the PA domain. N91 and N123 each carry an N-linked (GlcNAc...) asparagine glycan. A helical membrane pass occupies residues 169–189 (MVIIFVMAVGTVAIGGYWAGS). Over 190 to 216 (HDVKKYMKHKRDDGPEKQEDEAVDVTP) the chain is Cytoplasmic. Residues 217-237 (VMICVFVVMCCFMLVLLYYFY) form a helical membrane-spanning segment. Topologically, residues 238–239 (DR) are lumenal. The helical transmembrane segment at 240-260 (LVYVIIGIFCLASSTGLYSCL) threads the bilayer. At 261–286 (APFVRKLPFCTCRVPDNNLPYFHKRP) the chain is on the cytoplasmic side. A helical membrane pass occupies residues 287-307 (QARMLLLALFCVTVSVVWGIF). At 308–312 (RNEDQ) the chain is on the lumenal side. The chain crosses the membrane as a helical span at residues 313-333 (WAWVLQDTLGIAFCLYMLKTI). The Cytoplasmic portion of the chain corresponds to 334–341 (RLPTFKAC). The chain crosses the membrane as a helical span at residues 342-362 (TLLLLVLFIYDIFFVFITPFL). D352 is an active-site residue. Residues 363–405 (TKSGNSIMVEVATGPSNSSTHEKLPMVLKVPRLNTSPLSLCDR) lie on the Lumenal side of the membrane. Residues 406 to 426 (PFSLLGFGDILVPGLLVAYCH) traverse the membrane as a helical segment. Residue D414 is part of the active site. Residues 427-438 (RFDIQVQSSRIY) are Cytoplasmic-facing. A helical membrane pass occupies residues 439-459 (FVACTIAYGLGLLVTFVALVL). Residues 460-463 (MQRG) lie on the Lumenal side of the membrane. The chain crosses the membrane as a helical span at residues 464 to 484 (QPALLYLVPCTLLTSCTVALW). The PAL motif lies at 465–467 (PAL). At 485-578 (RRELGAFWTG…IPVVKPETSA (94 aa)) the chain is on the cytoplasmic side. The tract at residues 502–578 (PQTPWAATQG…IPVVKPETSA (77 aa)) is disordered. Residues 520–529 (SSLSEQPPSE) show a composition bias toward low complexity.

It belongs to the peptidase A22B family. In terms of assembly, monomer. Homodimer. Interacts with ITM2B and TNF. Post-translationally, glycosylated.

It localises to the cell membrane. The protein resides in the golgi apparatus membrane. It is found in the lysosome membrane. The protein localises to the endosome membrane. Its subcellular location is the membrane. Functionally, intramembrane-cleaving aspartic protease (I-CLiP) that cleaves type II membrane signal peptides in the hydrophobic plane of the membrane. Functions in ITM2B and TNF processing. Catalyzes the intramembrane cleavage of the anchored fragment of shed TNF-alpha (TNF), which promotes the release of the intracellular domain (ICD) for signaling to the nucleus. May play a role in the regulation of innate and adaptive immunity. In Mus musculus (Mouse), this protein is Signal peptide peptidase-like 2B.